The sequence spans 465 residues: Argininosuccinate lyase (465 aa).

The protein belongs to the lyase 1 family. Argininosuccinate lyase subfamily.

It is found in the cytoplasm. It carries out the reaction 2-(N(omega)-L-arginino)succinate = fumarate + L-arginine. The protein operates within amino-acid biosynthesis; L-arginine biosynthesis; L-arginine from L-ornithine and carbamoyl phosphate: step 3/3. This Nitrobacter winogradskyi (strain ATCC 25391 / DSM 10237 / CIP 104748 / NCIMB 11846 / Nb-255) protein is Argininosuccinate lyase.